A 394-amino-acid polypeptide reads, in one-letter code: Ornithine aminotransferase 1 (394 aa).

Position 252 is an N6-(pyridoxal phosphate)lysine (Lys-252).

The protein belongs to the class-III pyridoxal-phosphate-dependent aminotransferase family. OAT subfamily. Pyridoxal 5'-phosphate is required as a cofactor.

It localises to the cytoplasm. The enzyme catalyses a 2-oxocarboxylate + L-ornithine = L-glutamate 5-semialdehyde + an L-alpha-amino acid. It participates in amino-acid biosynthesis; L-proline biosynthesis; L-glutamate 5-semialdehyde from L-ornithine: step 1/1. Functionally, catalyzes the interconversion of ornithine to glutamate semialdehyde. This is Ornithine aminotransferase 1 from Staphylococcus aureus (strain Mu50 / ATCC 700699).